Consider the following 226-residue polypeptide: 7-cyano-7-deazaguanine synthase (226 aa).

7 to 17 (LSGGMDSLVTT) contacts ATP. Residues Cys-187, Cys-195, Cys-198, and Cys-201 each coordinate Zn(2+).

Belongs to the QueC family. Requires Zn(2+) as cofactor.

The catalysed reaction is 7-carboxy-7-deazaguanine + NH4(+) + ATP = 7-cyano-7-deazaguanine + ADP + phosphate + H2O + H(+). The protein operates within purine metabolism; 7-cyano-7-deazaguanine biosynthesis. In terms of biological role, catalyzes the ATP-dependent conversion of 7-carboxy-7-deazaguanine (CDG) to 7-cyano-7-deazaguanine (preQ(0)). This Chloroherpeton thalassium (strain ATCC 35110 / GB-78) protein is 7-cyano-7-deazaguanine synthase.